We begin with the raw amino-acid sequence, 164 residues long: UPF0304 protein CKO_00501 (164 aa).

It belongs to the UPF0304 family.

This Citrobacter koseri (strain ATCC BAA-895 / CDC 4225-83 / SGSC4696) protein is UPF0304 protein CKO_00501.